Consider the following 87-residue polypeptide: Small ribosomal subunit protein bS20 (87 aa).

Belongs to the bacterial ribosomal protein bS20 family.

Functionally, binds directly to 16S ribosomal RNA. The polypeptide is Small ribosomal subunit protein bS20 (Halothermothrix orenii (strain H 168 / OCM 544 / DSM 9562)).